Here is a 472-residue protein sequence, read N- to C-terminus: Adenosylhomocysteinase (472 aa).

Threonine 61, aspartate 139, and glutamate 198 together coordinate substrate. 199-201 (TTT) provides a ligand contact to NAD(+). Substrate contacts are provided by lysine 228 and aspartate 232. NAD(+)-binding positions include asparagine 233, 262–267 (GFGDVG), glutamate 285, asparagine 320, 341–343 (IGH), and asparagine 386.

Belongs to the adenosylhomocysteinase family. NAD(+) is required as a cofactor.

The protein resides in the cytoplasm. It carries out the reaction S-adenosyl-L-homocysteine + H2O = L-homocysteine + adenosine. It participates in amino-acid biosynthesis; L-homocysteine biosynthesis; L-homocysteine from S-adenosyl-L-homocysteine: step 1/1. May play a key role in the regulation of the intracellular concentration of adenosylhomocysteine. The protein is Adenosylhomocysteinase of Sphingopyxis alaskensis (strain DSM 13593 / LMG 18877 / RB2256) (Sphingomonas alaskensis).